The chain runs to 283 residues: Elongation factor Ts (283 aa).

The involved in Mg(2+) ion dislocation from EF-Tu stretch occupies residues 80–83; it reads TDFV.

It belongs to the EF-Ts family.

The protein resides in the cytoplasm. Associates with the EF-Tu.GDP complex and induces the exchange of GDP to GTP. It remains bound to the aminoacyl-tRNA.EF-Tu.GTP complex up to the GTP hydrolysis stage on the ribosome. The polypeptide is Elongation factor Ts (Actinobacillus pleuropneumoniae serotype 3 (strain JL03)).